The sequence spans 54 residues: MAKIRPPKPKRMGRGAQRCQRCGTRDAVIQKYGLYLCRQCFREIAPTLGFRKNR.

4 residues coordinate Zn(2+): Cys-19, Cys-22, Cys-37, and Cys-40.

It belongs to the universal ribosomal protein uS14 family. Zinc-binding uS14 subfamily. In terms of assembly, part of the 30S ribosomal subunit. Zn(2+) is required as a cofactor.

Its function is as follows. Binds 16S rRNA, required for the assembly of 30S particles. This chain is Small ribosomal subunit protein uS14, found in Aeropyrum pernix (strain ATCC 700893 / DSM 11879 / JCM 9820 / NBRC 100138 / K1).